Consider the following 461-residue polypeptide: PTS system sucrose-specific EIIBC component (461 aa).

Residues 4 to 87 form the PTS EIIB type-1 domain; the sequence is KETAKRLIEL…SKEADIEREE (84 aa). The active-site Phosphocysteine intermediate; for EIIB activity is the Cys-26. One can recognise a PTS EIIC type-1 domain in the interval 107 to 461; sequence KTLSNIFVPI…KINEDEERKK (355 aa). 10 helical membrane-spanning segments follow: residues 112 to 132, 148 to 168, 178 to 198, 208 to 228, 248 to 268, 289 to 309, 329 to 349, 359 to 379, 387 to 407, and 430 to 450; these read IFVP…LLGM, LLDM…GVSA, LGAV…WGLA, FGFD…LLAV, LLVT…IAIG, AGFV…LTGV, LLPI…AVFF, IALP…IFGV, FIAA…THVA, and LIHY…AAFV.

The protein resides in the cell membrane. It carries out the reaction N(pros)-phospho-L-histidyl-[protein](out) + sucrose = sucrose 6(G)-phosphate(in) + L-histidyl-[protein]. The phosphoenolpyruvate-dependent sugar phosphotransferase system (sugar PTS), a major carbohydrate active transport system, catalyzes the phosphorylation of incoming sugar substrates concomitantly with their translocation across the cell membrane. This system is involved in sucrose transport. This is PTS system sucrose-specific EIIBC component (sacP) from Bacillus subtilis (strain 168).